Reading from the N-terminus, the 24-residue chain is Protein YsdE (24 aa).

The chain is Protein YsdE from Escherichia coli (strain K12).